The sequence spans 199 residues: Inner membrane-spanning protein YciB (199 aa).

The next 5 helical transmembrane spans lie at 3–23 (LLIDFFPIILFFVAFKVWGIY), 47–67 (VEPMQWVSLGVIVLFGGATLL), 76–96 (WKPSVLYWLMGSALLIGQLVF), 119–139 (LNWSWAAFFAVMGALNLVIAY), and 149–169 (FKLFGGMGLMLVFVIGQAIYM). The interval 180-199 (AAAATPDALPPPGVQQDKQP) is disordered.

This sequence belongs to the YciB family.

Its subcellular location is the cell inner membrane. In terms of biological role, plays a role in cell envelope biogenesis, maintenance of cell envelope integrity and membrane homeostasis. This Delftia acidovorans (strain DSM 14801 / SPH-1) protein is Inner membrane-spanning protein YciB.